We begin with the raw amino-acid sequence, 164 residues long: Seripauperin-21 (164 aa).

This sequence belongs to the SRP1/TIP1 family. Seripauperin subfamily.

This is Seripauperin-21 (PAU21) from Saccharomyces cerevisiae (strain ATCC 204508 / S288c) (Baker's yeast).